We begin with the raw amino-acid sequence, 372 residues long: Glutamate 5-kinase (372 aa).

K9 provides a ligand contact to ATP. Substrate is bound by residues S49, D136, and N148. ATP-binding positions include 168–169 and 210–216; these read TD and TGGMKSK. A PUA domain is found at 276-353; it reads AGSIEIDSGA…EEALSLTKRS (78 aa).

Belongs to the glutamate 5-kinase family.

It is found in the cytoplasm. It catalyses the reaction L-glutamate + ATP = L-glutamyl 5-phosphate + ADP. The protein operates within amino-acid biosynthesis; L-proline biosynthesis; L-glutamate 5-semialdehyde from L-glutamate: step 1/2. Its function is as follows. Catalyzes the transfer of a phosphate group to glutamate to form L-glutamate 5-phosphate. This is Glutamate 5-kinase from Shouchella clausii (strain KSM-K16) (Alkalihalobacillus clausii).